The sequence spans 221 residues: Membrane-bound lytic murein transglycosylase E (221 aa).

Belongs to the transglycosylase Slt family.

The enzyme catalyses Exolytic cleavage of the (1-&gt;4)-beta-glycosidic linkage between N-acetylmuramic acid (MurNAc) and N-acetylglucosamine (GlcNAc) residues in peptidoglycan, from either the reducing or the non-reducing ends of the peptidoglycan chains, with concomitant formation of a 1,6-anhydrobond in the MurNAc residue.. Murein-degrading enzyme. May play a role in recycling of muropeptides during cell elongation and/or cell division. This is Membrane-bound lytic murein transglycosylase E (mltE) from Buchnera aphidicola subsp. Acyrthosiphon pisum (strain APS) (Acyrthosiphon pisum symbiotic bacterium).